A 118-amino-acid polypeptide reads, in one-letter code: Small ribosomal subunit protein uS13 (118 aa).

The interval 93-118 (RGLPVRGQRTKTNARTRKGPRKPIRK) is disordered.

The protein belongs to the universal ribosomal protein uS13 family. Part of the 30S ribosomal subunit. Forms a loose heterodimer with protein S19. Forms two bridges to the 50S subunit in the 70S ribosome.

In terms of biological role, located at the top of the head of the 30S subunit, it contacts several helices of the 16S rRNA. In the 70S ribosome it contacts the 23S rRNA (bridge B1a) and protein L5 of the 50S subunit (bridge B1b), connecting the 2 subunits; these bridges are implicated in subunit movement. Contacts the tRNAs in the A and P-sites. The sequence is that of Small ribosomal subunit protein uS13 from Pseudomonas paraeruginosa (strain DSM 24068 / PA7) (Pseudomonas aeruginosa (strain PA7)).